The following is a 99-amino-acid chain: Large ribosomal subunit protein uL23 (99 aa).

Belongs to the universal ribosomal protein uL23 family. In terms of assembly, part of the 50S ribosomal subunit. Contacts protein L29, and trigger factor when it is bound to the ribosome.

Functionally, one of the early assembly proteins it binds 23S rRNA. One of the proteins that surrounds the polypeptide exit tunnel on the outside of the ribosome. Forms the main docking site for trigger factor binding to the ribosome. The protein is Large ribosomal subunit protein uL23 of Leifsonia xyli subsp. xyli (strain CTCB07).